A 472-amino-acid polypeptide reads, in one-letter code: 3-isopropylmalate dehydratase large subunit (472 aa).

3 residues coordinate [4Fe-4S] cluster: cysteine 347, cysteine 407, and cysteine 410.

It belongs to the aconitase/IPM isomerase family. LeuC type 1 subfamily. As to quaternary structure, heterodimer of LeuC and LeuD. [4Fe-4S] cluster serves as cofactor.

The enzyme catalyses (2R,3S)-3-isopropylmalate = (2S)-2-isopropylmalate. It functions in the pathway amino-acid biosynthesis; L-leucine biosynthesis; L-leucine from 3-methyl-2-oxobutanoate: step 2/4. Functionally, catalyzes the isomerization between 2-isopropylmalate and 3-isopropylmalate, via the formation of 2-isopropylmaleate. This chain is 3-isopropylmalate dehydratase large subunit, found in Synechococcus sp. (strain CC9605).